The primary structure comprises 398 residues: Flavohemoprotein (398 aa).

The region spanning 9–147 is the Globin domain; sequence QLTPAQIKII…LAKLLIDLEA (139 aa). Heme b is bound at residue histidine 93. Residues tyrosine 103 and glutamate 146 each act as charge relay system in the active site. The interval 155-398 is reductase; sequence WRWFKDFKVT…KLEYFGPYDP (244 aa). Residues 156–263 form the FAD-binding FR-type domain; that stretch reads RWFKDFKVTR…APPAGNFVYD (108 aa). Residues tyrosine 196 and 212-215 contribute to the FAD site; that span reads REYS. Residue 276 to 281 participates in NADP(+) binding; that stretch reads GIGITP. 395–398 contributes to the FAD binding site; the sequence is PYDP.

This sequence belongs to the globin family. Requires FAD as cofactor. It depends on heme b as a cofactor.

The protein resides in the cytoplasm. The enzyme catalyses 2 nitric oxide + NADPH + 2 O2 = 2 nitrate + NADP(+) + H(+). It carries out the reaction 2 nitric oxide + NADH + 2 O2 = 2 nitrate + NAD(+) + H(+). Its activity is regulated as follows. Inhibited by imidazoles. Functionally, nitric oxide dioxygenase involved in NO detoxification in an aerobic process, termed nitric oxide dioxygenase (NOD) reaction that utilizes O(2) and NAD(P)H to convert NO to nitrate, which protects the fungus from various noxious nitrogen compounds. Therefore, plays a central role in the inducible response to nitrosative stress. Plays a role in virulence since nitric oxide is generated by macrophages of the host immune system. This Candida albicans (strain SC5314 / ATCC MYA-2876) (Yeast) protein is Flavohemoprotein (YHB1).